Reading from the N-terminus, the 322-residue chain is Ferredoxin--NADP reductase (322 aa).

Residues Asp34, Gln42, Tyr47, Val87, Phe120, Asp279, and Thr320 each contribute to the FAD site.

This sequence belongs to the ferredoxin--NADP reductase type 2 family. As to quaternary structure, homodimer. FAD serves as cofactor.

The enzyme catalyses 2 reduced [2Fe-2S]-[ferredoxin] + NADP(+) + H(+) = 2 oxidized [2Fe-2S]-[ferredoxin] + NADPH. This is Ferredoxin--NADP reductase from Streptococcus pneumoniae serotype 2 (strain D39 / NCTC 7466).